Here is a 170-residue protein sequence, read N- to C-terminus: Large ribosomal subunit protein uL5 (170 aa).

Belongs to the universal ribosomal protein uL5 family. As to quaternary structure, component of the large ribosomal subunit.

The protein localises to the nucleus. It is found in the cytoplasm. In terms of biological role, component of the ribosome, a large ribonucleoprotein complex responsible for the synthesis of proteins in the cell. The small ribosomal subunit (SSU) binds messenger RNAs (mRNAs) and translates the encoded message by selecting cognate aminoacyl-transfer RNA (tRNA) molecules. The large subunit (LSU) contains the ribosomal catalytic site termed the peptidyl transferase center (PTC), which catalyzes the formation of peptide bonds, thereby polymerizing the amino acids delivered by tRNAs into a polypeptide chain. The nascent polypeptides leave the ribosome through a tunnel in the LSU and interact with protein factors that function in enzymatic processing, targeting, and the membrane insertion of nascent chains at the exit of the ribosomal tunnel. The chain is Large ribosomal subunit protein uL5 (RPL11) from Chlamydomonas reinhardtii (Chlamydomonas smithii).